Here is a 330-residue protein sequence, read N- to C-terminus: Apolipoprotein E (330 aa).

Residues 1-18 (MKVLWAALVVALLAGCWA) form the signal peptide. A disordered region spans residues 21 to 43 (EPESPLQGKPEPELEPELEPKRE). 7 tandem repeats follow at residues 96–117 (TLME…EQLG), 118–139 (PMAS…ARLR), 140–161 (SDME…AMLG), 162–183 (QSTE…KRVL), 184–205 (RDAE…EGAE), 206–227 (RSVS…TRHA), and 247–268 (GRLE…EQME). Positions 96 to 268 (TLMEETMKEI…HLDEVREQME (173 aa)) are 7 X 22 AA approximate tandem repeats. Met159 is subject to Methionine sulfoxide. Ser163 bears the Phosphoserine mark. The interval 174 to 184 (HMRKLRKRVLR) is LDL and other lipoprotein receptors binding. 178–181 (LRKR) is a heparin binding site. The lipid-binding and lipoprotein association stretch occupies residues 226–303 (HANLATQPLR…SWFEPLVEDM (78 aa)). 242 to 249 (GQQLRGRL) provides a ligand contact to heparin. The segment at 279 to 330 (NQMRQQVEAFQARLKSWFEPLVEDMQRQWAGLVEKVQVAVGTSPTTPPLETK) is homooligomerization. The tract at residues 291–303 (RLKSWFEPLVEDM) is specificity for association with VLDL.

This sequence belongs to the apolipoprotein A1/A4/E family. As to quaternary structure, homotetramer. May interact with ABCA1; functionally associated with ABCA1 in the biogenesis of HDLs. May interact with APP/A4 amyloid-beta peptide; the interaction is extremely stable in vitro but its physiological significance is unclear. May interact with MAPT. May interact with MAP2. In the cerebrospinal fluid, interacts with secreted SORL1. Interacts with PMEL; this allows the loading of PMEL luminal fragment on ILVs to induce fibril nucleation. In terms of processing, APOE exists as multiple glycosylated and sialylated glycoforms within cells and in plasma. The extent of glycosylation and sialylation are tissue and context specific. Glycated in plasma VLDL. Post-translationally, phosphorylated by FAM20C in the extracellular medium.

The protein resides in the secreted. The protein localises to the extracellular space. It is found in the extracellular matrix. Its subcellular location is the extracellular vesicle. It localises to the endosome. The protein resides in the multivesicular body. APOE is an apolipoprotein, a protein associating with lipid particles, that mainly functions in lipoprotein-mediated lipid transport between organs via the plasma and interstitial fluids. APOE is a core component of plasma lipoproteins and is involved in their production, conversion and clearance. Apolipoproteins are amphipathic molecules that interact both with lipids of the lipoprotein particle core and the aqueous environment of the plasma. As such, APOE associates with chylomicrons, chylomicron remnants, very low density lipoproteins (VLDL) and intermediate density lipoproteins (IDL) but shows a preferential binding to high-density lipoproteins (HDL). It also binds a wide range of cellular receptors including the LDL receptor/LDLR, the LDL receptor-related proteins LRP1, LRP2 and LRP8 and the very low-density lipoprotein receptor/VLDLR that mediate the cellular uptake of the APOE-containing lipoprotein particles. Finally, APOE also has a heparin-binding activity and binds heparan-sulfate proteoglycans on the surface of cells, a property that supports the capture and the receptor-mediated uptake of APOE-containing lipoproteins by cells. A main function of APOE is to mediate lipoprotein clearance through the uptake of chylomicrons, VLDLs, and HDLs by hepatocytes. APOE is also involved in the biosynthesis by the liver of VLDLs as well as their uptake by peripheral tissues ensuring the delivery of triglycerides and energy storage in muscle, heart and adipose tissues. By participating in the lipoprotein-mediated distribution of lipids among tissues, APOE plays a critical role in plasma and tissues lipid homeostasis. APOE is also involved in two steps of reverse cholesterol transport, the HDLs-mediated transport of cholesterol from peripheral tissues to the liver, and thereby plays an important role in cholesterol homeostasis. First, it is functionally associated with ABCA1 in the biogenesis of HDLs in tissues. Second, it is enriched in circulating HDLs and mediates their uptake by hepatocytes. APOE also plays an important role in lipid transport in the central nervous system, regulating neuron survival and sprouting. The protein is Apolipoprotein E (APOE) of Neomonachus schauinslandi (Hawaiian monk seal).